The sequence spans 290 residues: 33 kDa chaperonin (290 aa).

2 cysteine pairs are disulfide-bonded: Cys-235–Cys-237 and Cys-268–Cys-271.

This sequence belongs to the HSP33 family. Post-translationally, under oxidizing conditions two disulfide bonds are formed involving the reactive cysteines. Under reducing conditions zinc is bound to the reactive cysteines and the protein is inactive.

Its subcellular location is the cytoplasm. Its function is as follows. Redox regulated molecular chaperone. Protects both thermally unfolding and oxidatively damaged proteins from irreversible aggregation. Plays an important role in the bacterial defense system toward oxidative stress. The protein is 33 kDa chaperonin of Streptococcus pyogenes serotype M28 (strain MGAS6180).